We begin with the raw amino-acid sequence, 136 residues long: MSTAKLDDSTQRPLYGERIIEESKIICFENPNKKRIYEISIQLPEFTCKCPFSGYPDFAKLNIIYQPNLSVYELKSLKLYINNFRDIKISHEEVVNRIMDDLVNEGSPHWIHLNAAFNPRGNVSMQLDIFSGQKRN.

Catalysis depends on Cys-50, which acts as the Thioimide intermediate. The Proton donor role is filled by Asp-57. Substrate contacts are provided by residues 72–74 (YEL) and 91–92 (HE).

Belongs to the GTP cyclohydrolase I family. QueF type 1 subfamily.

The protein resides in the cytoplasm. It carries out the reaction 7-aminomethyl-7-carbaguanine + 2 NADP(+) = 7-cyano-7-deazaguanine + 2 NADPH + 3 H(+). Its pathway is tRNA modification; tRNA-queuosine biosynthesis. In terms of biological role, catalyzes the NADPH-dependent reduction of 7-cyano-7-deazaguanine (preQ0) to 7-aminomethyl-7-deazaguanine (preQ1). The sequence is that of NADPH-dependent 7-cyano-7-deazaguanine reductase from Prochlorococcus marinus (strain MIT 9312).